The chain runs to 546 residues: CTP synthase (546 aa).

Positions 1-265 (MTKYVFVTGG…DEIVCHKLNI (265 aa)) are amidoligase domain. S13 provides a ligand contact to CTP. S13 contacts UTP. Residues 14–19 (SLGKGI) and D71 each bind ATP. Mg(2+) contacts are provided by D71 and E139. CTP contacts are provided by residues 146–148 (DIE), 186–191 (KTKPTQ), and K222. Residues 186–191 (KTKPTQ) and K222 contribute to the UTP site. A Glutamine amidotransferase type-1 domain is found at 290 to 543 (KIAFVGKYVD…VKAALANQKA (254 aa)). An L-glutamine-binding site is contributed by G351. C378 functions as the Nucleophile; for glutamine hydrolysis in the catalytic mechanism. L-glutamine contacts are provided by residues 379-382 (LGMQ), E402, and R469. Active-site residues include H516 and E518.

The protein belongs to the CTP synthase family. In terms of assembly, homotetramer.

It carries out the reaction UTP + L-glutamine + ATP + H2O = CTP + L-glutamate + ADP + phosphate + 2 H(+). It catalyses the reaction L-glutamine + H2O = L-glutamate + NH4(+). The enzyme catalyses UTP + NH4(+) + ATP = CTP + ADP + phosphate + 2 H(+). It participates in pyrimidine metabolism; CTP biosynthesis via de novo pathway; CTP from UDP: step 2/2. Its activity is regulated as follows. Allosterically activated by GTP, when glutamine is the substrate; GTP has no effect on the reaction when ammonia is the substrate. The allosteric effector GTP functions by stabilizing the protein conformation that binds the tetrahedral intermediate(s) formed during glutamine hydrolysis. Inhibited by the product CTP, via allosteric rather than competitive inhibition. Its function is as follows. Catalyzes the ATP-dependent amination of UTP to CTP with either L-glutamine or ammonia as the source of nitrogen. Regulates intracellular CTP levels through interactions with the four ribonucleotide triphosphates. The sequence is that of CTP synthase from Dechloromonas aromatica (strain RCB).